A 1342-amino-acid polypeptide reads, in one-letter code: Cytokinesis protein sepH (1342 aa).

Over residues 1 to 10 (MVSRSSEGAE) the composition is skewed to low complexity. Residues 1–47 (MVSRSSEGAEGPPPSAPKPPNTPAKSRLSRLGSSPSKREDKSRDDRM) form a disordered region. Over residues 11–22 (GPPPSAPKPPNT) the composition is skewed to pro residues. A compositionally biased stretch (basic and acidic residues) spans 36 to 47 (SKREDKSRDDRM). Positions 61 to 308 (YQLGDCLGKG…ARKLLKHPWI (248 aa)) constitute a Protein kinase domain. Residues 67 to 75 (LGKGAFGSV) and lysine 90 each bind ATP. The Proton acceptor role is filled by aspartate 180. Disordered regions lie at residues 336-396 (NEAL…EEDN), 441-486 (IKSD…QLQE), and 552-591 (ADEN…ISVK). Residues 369 to 379 (KDTLPSPVSRN) show a composition bias toward polar residues. Residues 658–695 (FAQLEEGLDEMDLEANIARDKHARLRNQVEGLVSSLKT) are a coiled coil. Positions 1201–1342 (SEAYGMGKRK…QTQADADWTP (142 aa)) are disordered. Basic residues predominate over residues 1207 to 1217 (GKRKPMVRRRS). Polar residues-rich tracts occupy residues 1218 to 1244 (TSAT…SQSK) and 1273 to 1290 (DGST…TGAS). Residues 1315–1324 (RPSSSLSRRQ) are compositionally biased toward low complexity.

This sequence belongs to the protein kinase superfamily. Ser/Thr protein kinase family. CDC7 subfamily. Mg(2+) serves as cofactor.

It catalyses the reaction L-seryl-[protein] + ATP = O-phospho-L-seryl-[protein] + ADP + H(+). The enzyme catalyses L-threonyl-[protein] + ATP = O-phospho-L-threonyl-[protein] + ADP + H(+). In terms of biological role, required for early events during cytokinesis including localization of cytoskeletal components to the cytokinetic ring. The protein is Cytokinesis protein sepH of Aspergillus terreus (strain NIH 2624 / FGSC A1156).